Here is a 907-residue protein sequence, read N- to C-terminus: DNA mismatch repair protein MutS (907 aa).

656–663 (GPNMAGKS) is a binding site for ATP.

The protein belongs to the DNA mismatch repair MutS family.

This protein is involved in the repair of mismatches in DNA. It is possible that it carries out the mismatch recognition step. This protein has a weak ATPase activity. This Nitrobacter hamburgensis (strain DSM 10229 / NCIMB 13809 / X14) protein is DNA mismatch repair protein MutS.